The chain runs to 63 residues: Non-structural protein 3b (63 aa).

The polypeptide is Non-structural protein 3b (Avian infectious bronchitis virus (strain UK/183/66) (IBV)).